The primary structure comprises 218 residues: MLTVALPKGALLKDSIRLLQSVGLDFSAFLDSGNRQLQIQDPTQTAQGLLVRAQDVPVYVEYGQAQLGIVGFDVLQEKKPQVAQFADLGFGHCRMSVAVPSQSPYRSAMELPPNCRVASKFVHCAHDFFSKIDLPVEIIPLYGSVELGPITGMSEAIVDLVSTGRTLKENGLIELDCLYDSTARLIAHPLSYRLNQYNLEHWLNEISKNSQPLAAKAS.

The protein belongs to the ATP phosphoribosyltransferase family. Short subfamily. As to quaternary structure, heteromultimer composed of HisG and HisZ subunits.

The protein resides in the cytoplasm. The enzyme catalyses 1-(5-phospho-beta-D-ribosyl)-ATP + diphosphate = 5-phospho-alpha-D-ribose 1-diphosphate + ATP. It functions in the pathway amino-acid biosynthesis; L-histidine biosynthesis; L-histidine from 5-phospho-alpha-D-ribose 1-diphosphate: step 1/9. Its function is as follows. Catalyzes the condensation of ATP and 5-phosphoribose 1-diphosphate to form N'-(5'-phosphoribosyl)-ATP (PR-ATP). Has a crucial role in the pathway because the rate of histidine biosynthesis seems to be controlled primarily by regulation of HisG enzymatic activity. This Acaryochloris marina (strain MBIC 11017) protein is ATP phosphoribosyltransferase.